A 124-amino-acid polypeptide reads, in one-letter code: Large ribosomal subunit protein bL19 (124 aa).

This sequence belongs to the bacterial ribosomal protein bL19 family.

In terms of biological role, this protein is located at the 30S-50S ribosomal subunit interface and may play a role in the structure and function of the aminoacyl-tRNA binding site. The sequence is that of Large ribosomal subunit protein bL19 from Orientia tsutsugamushi (strain Boryong) (Rickettsia tsutsugamushi).